The sequence spans 130 residues: Small ribosomal subunit protein uS8 (130 aa).

It belongs to the universal ribosomal protein uS8 family. Part of the 30S ribosomal subunit.

Functionally, one of the primary rRNA binding proteins, it binds directly to 16S rRNA central domain where it helps coordinate assembly of the platform of the 30S subunit. This Pyrococcus furiosus (strain ATCC 43587 / DSM 3638 / JCM 8422 / Vc1) protein is Small ribosomal subunit protein uS8.